The following is a 550-amino-acid chain: Chaperonin GroEL (550 aa).

Residues 30–33, Lys51, 87–91, Gly415, 479–481, and Asp495 contribute to the ATP site; these read TLGP, DGTTT, and NAA.

Belongs to the chaperonin (HSP60) family. Forms a cylinder of 14 subunits composed of two heptameric rings stacked back-to-back. Interacts with the co-chaperonin GroES.

The protein localises to the cytoplasm. The enzyme catalyses ATP + H2O + a folded polypeptide = ADP + phosphate + an unfolded polypeptide.. Together with its co-chaperonin GroES, plays an essential role in assisting protein folding. The GroEL-GroES system forms a nano-cage that allows encapsulation of the non-native substrate proteins and provides a physical environment optimized to promote and accelerate protein folding. This Polaromonas sp. (strain JS666 / ATCC BAA-500) protein is Chaperonin GroEL.